Reading from the N-terminus, the 318-residue chain is Nuclear egress protein 1 (318 aa).

Residues 129-239 (CLRLSPFGHS…HLLLQGTSLH (111 aa)) form a CCCH-type zinc finger.

Belongs to the herpesviridae NEC1 protein family. As to quaternary structure, forms a heterodimeric viral nuclear egress complex (NEC) with NEC2. Interacts with capsid vertex specific component 2/CVC2; this interaction directs the capsid to the host inner nuclear membrane to initiate budding. Phosphorylated at serine residues in the N-terminus. This phosphorylation regulates the localization within the inner nuclear membrane.

It is found in the host nucleus inner membrane. In terms of biological role, plays an essential role in virion nuclear egress, the first step of virion release from infected cell. Within the host nucleus, NEC1 interacts with the newly formed capsid through the vertexes and directs it to the inner nuclear membrane by associating with NEC2. Induces the budding of the capsid at the inner nuclear membrane as well as its envelopment into the perinuclear space. There, the NEC1/NEC2 complex promotes the fusion of the enveloped capsid with the outer nuclear membrane and the subsequent release of the viral capsid into the cytoplasm where it will reach the secondary budding sites in the host Golgi or trans-Golgi network. The chain is Nuclear egress protein 1 from Homo sapiens (Human).